A 335-amino-acid polypeptide reads, in one-letter code: Ferrochelatase (335 aa).

2 residues coordinate Fe cation: H207 and E288.

The protein belongs to the ferrochelatase family.

The protein localises to the cytoplasm. The catalysed reaction is heme b + 2 H(+) = protoporphyrin IX + Fe(2+). It participates in porphyrin-containing compound metabolism; protoheme biosynthesis; protoheme from protoporphyrin-IX: step 1/1. Functionally, catalyzes the ferrous insertion into protoporphyrin IX. The protein is Ferrochelatase of Helicobacter pylori (strain G27).